Here is a 129-residue protein sequence, read N- to C-terminus: Small ribosomal subunit protein uS11 (129 aa).

This sequence belongs to the universal ribosomal protein uS11 family. As to quaternary structure, part of the 30S ribosomal subunit. Interacts with proteins S7 and S18. Binds to IF-3.

Located on the platform of the 30S subunit, it bridges several disparate RNA helices of the 16S rRNA. Forms part of the Shine-Dalgarno cleft in the 70S ribosome. The chain is Small ribosomal subunit protein uS11 from Histophilus somni (strain 129Pt) (Haemophilus somnus).